We begin with the raw amino-acid sequence, 361 residues long: Peptide chain release factor 1 (361 aa).

Residue Q237 is modified to N5-methylglutamine.

It belongs to the prokaryotic/mitochondrial release factor family. In terms of processing, methylated by PrmC. Methylation increases the termination efficiency of RF1.

Its subcellular location is the cytoplasm. In terms of biological role, peptide chain release factor 1 directs the termination of translation in response to the peptide chain termination codons UAG and UAA. This chain is Peptide chain release factor 1, found in Chromohalobacter salexigens (strain ATCC BAA-138 / DSM 3043 / CIP 106854 / NCIMB 13768 / 1H11).